The sequence spans 317 residues: Apolipoprotein E (317 aa).

Residues 1–18 (MKVLWAALLVTFLAGCQA) form the signal peptide. A run of 8 repeats spans residues 80-101 (ALMD…EQLT), 102-123 (PVAE…ARLG), 124-145 (ADME…AMLG), 146-167 (QSTE…KRLL), 168-189 (RDAD…EGAE), 190-211 (RGVS…VRAA), 212-233 (TVGS…ERLR), and 234-255 (ARME…EQVA). Residues 80 to 255 (ALMDETMKEL…RLDEVKEQVA (176 aa)) form an 8 X 22 AA approximate tandem repeats region. Residue Met143 is modified to Methionine sulfoxide. Ser147 is subject to Phosphoserine. Residues 158-168 (HLRKLRKRLLR) are LDL and other lipoprotein receptors binding. Position 162 to 165 (162 to 165 (LRKR)) interacts with heparin. Positions 210 to 290 (AATVGSLAGQ…SWFEPLVEDM (81 aa)) are lipid-binding and lipoprotein association. Heparin is bound at residue 229-236 (GERLRARM). The segment at 266–317 (QQIRLQAEAFQARLKSWFEPLVEDMQRQWAGLVEKVQAAMGTSAAPVPSDNH) is homooligomerization. A specificity for association with VLDL region spans residues 278 to 290 (RLKSWFEPLVEDM).

The protein belongs to the apolipoprotein A1/A4/E family. As to quaternary structure, homotetramer. May interact with ABCA1; functionally associated with ABCA1 in the biogenesis of HDLs. May interact with APP/A4 amyloid-beta peptide; the interaction is extremely stable in vitro but its physiological significance is unclear. May interact with MAPT. May interact with MAP2. In the cerebrospinal fluid, interacts with secreted SORL1. Interacts with PMEL; this allows the loading of PMEL luminal fragment on ILVs to induce fibril nucleation. APOE exists as multiple glycosylated and sialylated glycoforms within cells and in plasma. The extent of glycosylation and sialylation are tissue and context specific. In terms of processing, glycated in plasma VLDL. Post-translationally, phosphorylated by FAM20C in the extracellular medium.

It is found in the secreted. It localises to the extracellular space. The protein localises to the extracellular matrix. The protein resides in the extracellular vesicle. Its subcellular location is the endosome. It is found in the multivesicular body. Its function is as follows. APOE is an apolipoprotein, a protein associating with lipid particles, that mainly functions in lipoprotein-mediated lipid transport between organs via the plasma and interstitial fluids. APOE is a core component of plasma lipoproteins and is involved in their production, conversion and clearance. Apolipoproteins are amphipathic molecules that interact both with lipids of the lipoprotein particle core and the aqueous environment of the plasma. As such, APOE associates with chylomicrons, chylomicron remnants, very low density lipoproteins (VLDL) and intermediate density lipoproteins (IDL) but shows a preferential binding to high-density lipoproteins (HDL). It also binds a wide range of cellular receptors including the LDL receptor/LDLR, the LDL receptor-related proteins LRP1, LRP2 and LRP8 and the very low-density lipoprotein receptor/VLDLR that mediate the cellular uptake of the APOE-containing lipoprotein particles. Finally, APOE also has a heparin-binding activity and binds heparan-sulfate proteoglycans on the surface of cells, a property that supports the capture and the receptor-mediated uptake of APOE-containing lipoproteins by cells. A main function of APOE is to mediate lipoprotein clearance through the uptake of chylomicrons, VLDLs, and HDLs by hepatocytes. APOE is also involved in the biosynthesis by the liver of VLDLs as well as their uptake by peripheral tissues ensuring the delivery of triglycerides and energy storage in muscle, heart and adipose tissues. By participating in the lipoprotein-mediated distribution of lipids among tissues, APOE plays a critical role in plasma and tissues lipid homeostasis. APOE is also involved in two steps of reverse cholesterol transport, the HDLs-mediated transport of cholesterol from peripheral tissues to the liver, and thereby plays an important role in cholesterol homeostasis. First, it is functionally associated with ABCA1 in the biogenesis of HDLs in tissues. Second, it is enriched in circulating HDLs and mediates their uptake by hepatocytes. APOE also plays an important role in lipid transport in the central nervous system, regulating neuron survival and sprouting. The polypeptide is Apolipoprotein E (APOE) (Gorilla gorilla gorilla (Western lowland gorilla)).